The sequence spans 77 residues: Sec-independent protein translocase protein TatA (77 aa).

A helical membrane pass occupies residues methionine 1 to glycine 21. The segment at lysine 40–alanine 77 is disordered. The span at aspartate 64–alanine 77 shows a compositional bias: basic and acidic residues.

This sequence belongs to the TatA/E family. In terms of assembly, the Tat system comprises two distinct complexes: a TatABC complex, containing multiple copies of TatA, TatB and TatC subunits, and a separate TatA complex, containing only TatA subunits. Substrates initially bind to the TatABC complex, which probably triggers association of the separate TatA complex to form the active translocon.

The protein resides in the cell inner membrane. Its function is as follows. Part of the twin-arginine translocation (Tat) system that transports large folded proteins containing a characteristic twin-arginine motif in their signal peptide across membranes. TatA could form the protein-conducting channel of the Tat system. This Burkholderia thailandensis (strain ATCC 700388 / DSM 13276 / CCUG 48851 / CIP 106301 / E264) protein is Sec-independent protein translocase protein TatA.